We begin with the raw amino-acid sequence, 436 residues long: 3-ketoacyl-CoA thiolase (436 aa).

Cys-99 acts as the Acyl-thioester intermediate in catalysis. Catalysis depends on proton acceptor residues His-392 and Cys-422.

It belongs to the thiolase-like superfamily. Thiolase family. Heterotetramer of two alpha chains (FadJ) and two beta chains (FadI).

It is found in the cytoplasm. The enzyme catalyses an acyl-CoA + acetyl-CoA = a 3-oxoacyl-CoA + CoA. Its pathway is lipid metabolism; fatty acid beta-oxidation. Functionally, catalyzes the final step of fatty acid oxidation in which acetyl-CoA is released and the CoA ester of a fatty acid two carbons shorter is formed. The chain is 3-ketoacyl-CoA thiolase from Escherichia coli O8 (strain IAI1).